Consider the following 182-residue polypeptide: MALQDKGILEALLYTAGDEGLDQQQLLEILEIEPTTLTELIEAYDSPGLTIQHYGNTYVLTTKKEASDYIEQLIEQKSKMKLSQAAMESLSIIAYNQPLSRSDIELIRGINSDGAVKTLIARGLVEAKEEADSRSHQLYTTELFLNVFGIEHLDDLPTTDEEDEEIEAFFSNLVNQKGDNHE.

This sequence belongs to the ScpB family. In terms of assembly, homodimer. Homodimerization may be required to stabilize the binding of ScpA to the Smc head domains. Component of a cohesin-like complex composed of ScpA, ScpB and the Smc homodimer, in which ScpA and ScpB bind to the head domain of Smc. The presence of the three proteins is required for the association of the complex with DNA.

The protein localises to the cytoplasm. Participates in chromosomal partition during cell division. May act via the formation of a condensin-like complex containing Smc and ScpA that pull DNA away from mid-cell into both cell halves. The polypeptide is Segregation and condensation protein B (Staphylococcus saprophyticus subsp. saprophyticus (strain ATCC 15305 / DSM 20229 / NCIMB 8711 / NCTC 7292 / S-41)).